A 621-amino-acid polypeptide reads, in one-letter code: pH-response transcription factor pacc-1 (621 aa).

The span at 1–14 (MSSTPAQENGTVNG) shows a compositional bias: polar residues. The tract at residues 1–87 (MSSTPAQENG…PTTASNSSAP (87 aa)) is disordered. A compositionally biased stretch (low complexity) spans 15–87 (ANAAPAPAPA…PTTASNSSAP (73 aa)). 3 consecutive C2H2-type zinc fingers follow at residues 95–120 (LVCR…CEKH), 131–155 (LTCQ…VRVH), and 161–183 (HKCD…VKTH). Disordered stretches follow at residues 395-539 (PTYA…PETY) and 566-621 (DEDD…PRIN). Low complexity-rich tracts occupy residues 409–423 (ASLA…PHSA) and 436–465 (SYTS…VSYP). The YPX[LI] motif 1 motif lies at 464–467 (YPTL). Polar residues predominate over residues 476-486 (PSTSGLGSNFT). Over residues 502–511 (RAADEADRAP) the composition is skewed to basic and acidic residues. Positions 515 to 525 (ASEQATVSSPS) are enriched in polar residues. The segment covering 583 to 595 (RNQQQRNQQQQQQ) has biased composition (low complexity). The short motif at 614 to 617 (YPVL) is the YPX[LI] motif 2 element.

It belongs to the pacC/RIM101 family. As to quaternary structure, binds to DNA. Interacts with palA/prr-1, which binds to the two YPX[LI] motifs and is required for proteolytic processing. In terms of processing, activated by C-terminal proteolytic cleavage by signaling protease (probably palB/RIM13) at neutral to alkaline ambient pH.

It localises to the cytoplasm. The protein localises to the nucleus. Transcription factor that mediates regulation of both acid- and alkaline-expressed genes in response to ambient pH. At alkaline ambient pH, activates transcription of alkaline-expressed genes (including pacc-1 itself) and represses transcription of acid-expressed genes. This is pH-response transcription factor pacc-1 (pacc-1) from Neurospora crassa (strain ATCC 24698 / 74-OR23-1A / CBS 708.71 / DSM 1257 / FGSC 987).